A 303-amino-acid chain; its full sequence is ATP synthase gamma chain (303 aa).

This sequence belongs to the ATPase gamma chain family. F-type ATPases have 2 components, CF(1) - the catalytic core - and CF(0) - the membrane proton channel. CF(1) has five subunits: alpha(3), beta(3), gamma(1), delta(1), epsilon(1). CF(0) has three main subunits: a, b and c.

It localises to the cell inner membrane. Produces ATP from ADP in the presence of a proton gradient across the membrane. The gamma chain is believed to be important in regulating ATPase activity and the flow of protons through the CF(0) complex. The polypeptide is ATP synthase gamma chain (Elusimicrobium minutum (strain Pei191)).